Reading from the N-terminus, the 596-residue chain is Elongation factor 4 (596 aa).

The 183-residue stretch at 2-184 (KHIRNFSIIA…VIVAKIPPPE (183 aa)) folds into the tr-type G domain. Residues 14-19 (DHGKST) and 131-134 (NKID) each bind GTP.

It belongs to the TRAFAC class translation factor GTPase superfamily. Classic translation factor GTPase family. LepA subfamily.

It localises to the cell inner membrane. The enzyme catalyses GTP + H2O = GDP + phosphate + H(+). Its function is as follows. Required for accurate and efficient protein synthesis under certain stress conditions. May act as a fidelity factor of the translation reaction, by catalyzing a one-codon backward translocation of tRNAs on improperly translocated ribosomes. Back-translocation proceeds from a post-translocation (POST) complex to a pre-translocation (PRE) complex, thus giving elongation factor G a second chance to translocate the tRNAs correctly. Binds to ribosomes in a GTP-dependent manner. The polypeptide is Elongation factor 4 (Shewanella putrefaciens (strain CN-32 / ATCC BAA-453)).